The following is a 332-amino-acid chain: tRNA-dihydrouridine synthase B (332 aa).

FMN contacts are provided by residues 16 to 18 and glutamine 70; that span reads PMA. Cysteine 100 (proton donor) is an active-site residue. FMN contacts are provided by residues lysine 139, 200–202, and 224–225; these read NGD and GR.

It belongs to the Dus family. DusB subfamily. The cofactor is FMN.

It catalyses the reaction a 5,6-dihydrouridine in tRNA + NAD(+) = a uridine in tRNA + NADH + H(+). The enzyme catalyses a 5,6-dihydrouridine in tRNA + NADP(+) = a uridine in tRNA + NADPH + H(+). Its function is as follows. Catalyzes the synthesis of 5,6-dihydrouridine (D), a modified base found in the D-loop of most tRNAs, via the reduction of the C5-C6 double bond in target uridines. The sequence is that of tRNA-dihydrouridine synthase B from Xanthomonas axonopodis pv. citri (strain 306).